A 276-amino-acid polypeptide reads, in one-letter code: NADH-cytochrome b5 reductase 2 (276 aa).

An FAD-binding FR-type domain is found at 15 to 127; sequence EAKYPLPLIE…RGPRGRLFYH (113 aa). The residue at position 17 (K17) is an N6-acetyllysine. Phosphotyrosine is present on Y18. FAD contacts are provided by residues 107–137 and 146–181; these read ENMK…IRPD and LADH…RMSL.

It belongs to the flavoprotein pyridine nucleotide cytochrome reductase family. It depends on FAD as a cofactor. As to expression, restricted expression.

The enzyme catalyses 2 Fe(III)-[cytochrome b5] + NADH = 2 Fe(II)-[cytochrome b5] + NAD(+) + H(+). In terms of biological role, NADH-cytochrome b5 reductases are involved in desaturation and elongation of fatty acids, cholesterol biosynthesis, drug metabolism, and, in erythrocyte, methemoglobin reduction. Responsible for NADH-dependent lucigenin chemiluminescence in spermatozoa by reducing both lucigenin and 2-[4-iodophenyl]-3-[4-nitrophenyl]-5-[2,4-disulfophenyl]-2H tetrazolium monosodium salt (WST-1). The sequence is that of NADH-cytochrome b5 reductase 2 from Homo sapiens (Human).